The chain runs to 89 residues: Small ribosomal subunit protein uS15 (89 aa).

It belongs to the universal ribosomal protein uS15 family. In terms of assembly, part of the 30S ribosomal subunit. Forms a bridge to the 50S subunit in the 70S ribosome, contacting the 23S rRNA.

In terms of biological role, one of the primary rRNA binding proteins, it binds directly to 16S rRNA where it helps nucleate assembly of the platform of the 30S subunit by binding and bridging several RNA helices of the 16S rRNA. Its function is as follows. Forms an intersubunit bridge (bridge B4) with the 23S rRNA of the 50S subunit in the ribosome. This is Small ribosomal subunit protein uS15 from Corynebacterium aurimucosum (strain ATCC 700975 / DSM 44827 / CIP 107346 / CN-1) (Corynebacterium nigricans).